The chain runs to 302 residues: Transmembrane protein 191C (302 aa).

Disordered stretches follow at residues 1–21 (MAAT…GRQR) and 54–73 (LRRR…EAAR). Residues 5-160 (QELLLQLQKD…EKLQQDALQT (156 aa)) adopt a coiled-coil conformation. The helical transmembrane segment at 238–258 (VLGALQVLLTLPLLFLGLSLL) threads the bilayer.

It belongs to the TMEM191 family.

Its subcellular location is the membrane. This chain is Transmembrane protein 191C, found in Homo sapiens (Human).